The following is a 249-amino-acid chain: Triosephosphate isomerase (249 aa).

Residue 11–13 coordinates substrate; sequence NWK. The active-site Electrophile is the His-91. The Proton acceptor role is filled by Glu-163. Substrate is bound by residues Gly-169, Ser-208, and 229–230; that span reads GG.

This sequence belongs to the triosephosphate isomerase family. Homodimer.

It localises to the cytoplasm. The catalysed reaction is D-glyceraldehyde 3-phosphate = dihydroxyacetone phosphate. The protein operates within carbohydrate biosynthesis; gluconeogenesis. It functions in the pathway carbohydrate degradation; glycolysis; D-glyceraldehyde 3-phosphate from glycerone phosphate: step 1/1. Involved in the gluconeogenesis. Catalyzes stereospecifically the conversion of dihydroxyacetone phosphate (DHAP) to D-glyceraldehyde-3-phosphate (G3P). This Pseudoalteromonas translucida (strain TAC 125) protein is Triosephosphate isomerase.